Here is a 74-residue protein sequence, read N- to C-terminus: Small ribosomal subunit protein eS17 (74 aa).

This sequence belongs to the eukaryotic ribosomal protein eS17 family.

The sequence is that of Small ribosomal subunit protein eS17 from Aeropyrum pernix (strain ATCC 700893 / DSM 11879 / JCM 9820 / NBRC 100138 / K1).